Consider the following 37-residue polypeptide: Large ribosomal subunit protein bL36 (37 aa).

Belongs to the bacterial ribosomal protein bL36 family.

In Histophilus somni (strain 129Pt) (Haemophilus somnus), this protein is Large ribosomal subunit protein bL36.